Here is a 318-residue protein sequence, read N- to C-terminus: uncharacterized protein (318 aa).

Residues 67–157 (LAFDELEKEK…SLKAIQTSQE (91 aa)) adopt a coiled-coil conformation. A disordered region spans residues 172 to 318 (ESTNKVEKNA…KGFFARLFNL (147 aa)). 2 stretches are compositionally biased toward basic and acidic residues: residues 175–193 (NKVE…KDSK) and 219–236 (KVDK…EKAS). The span at 237 to 248 (VEQSKNGNAAET) shows a compositional bias: polar residues. Composition is skewed to basic and acidic residues over residues 249–274 (SNKE…HAEA) and 300–310 (SEPKPQEEKKG).

This is an uncharacterized protein from Staphylococcus aureus (strain MW2).